The chain runs to 869 residues: Valine--tRNA ligase (869 aa).

Residues Pro47–Asn57 carry the 'HIGH' region motif. The 'KMSKS' region signature appears at Lys521 to Ser525. Residue Lys524 coordinates ATP.

It belongs to the class-I aminoacyl-tRNA synthetase family. ValS type 2 subfamily.

It localises to the cytoplasm. It catalyses the reaction tRNA(Val) + L-valine + ATP = L-valyl-tRNA(Val) + AMP + diphosphate. In terms of biological role, catalyzes the attachment of valine to tRNA(Val). As ValRS can inadvertently accommodate and process structurally similar amino acids such as threonine, to avoid such errors, it has a 'posttransfer' editing activity that hydrolyzes mischarged Thr-tRNA(Val) in a tRNA-dependent manner. This Methanosarcina mazei (strain ATCC BAA-159 / DSM 3647 / Goe1 / Go1 / JCM 11833 / OCM 88) (Methanosarcina frisia) protein is Valine--tRNA ligase.